We begin with the raw amino-acid sequence, 178 residues long: Platelet inhibitor triplatin-2 (178 aa).

An N-terminal signal peptide occupies residues 1–18 (MKMIISLTFLGILMLAFA). 3 disulfide bridges follow: Cys-25/Cys-134, Cys-60/Cys-178, and Cys-90/Cys-106.

Belongs to the calycin superfamily. Triabin family. In terms of tissue distribution, expressed in salivary glands.

The protein resides in the secreted. Its function is as follows. Inhibits platelet aggregation and vasoconstriction through binding to distinct eicosanoids involved in inflammation (acts as a scavenger), and has a role in inhibiting host innate immunity by impairing platelet-assisted formation of neutrophil extracellular traps (NETs). Inhibits platelet aggregation by collagen, and low doses of thromboxane A2 mimetic (TXA2 mimetic), and arachidonic acid (AA) without affecting aggregation induced by ADP, convulxin (GP6 agonist), and PMA. Binds to TXA2, TXB2, prostaglandine H2 mimetic (PGH2 mimetic), PGJ2, and PGF2alpha. Binding is not observed to leukotrienes, AA, and biogenic amines (PGE1, 5(S)-HETE, 12(S)-HETE, 20-HETE, norepinephrine, epinephrine, serotonin, LTC4 and ADP). Induces relaxation of aorta rat previously contracted with TXA2 mimetic. Moreover, it also impairs platelet-assisted formation of neutrophil extracellular traps (NETs). NETs are web-like structures of DNA and proteins that play an important role in killing of pathogens. In addition, NETs are implicated in thrombus formation. In vivo, this protein exhibits antithrombotic activity in two distinct mice models that are highly dependent on platelets. It is noteworthy that it inhibits thrombosis without promoting excessive bleeding. This Triatoma infestans (Assassin bug) protein is Platelet inhibitor triplatin-2.